A 378-amino-acid polypeptide reads, in one-letter code: Zinc transporter 7 (378 aa).

Topologically, residues 1-37 (MLPLSIKDDEYKPPRLNLFRKMSGWFRSILADKTSRN) are cytoplasmic. The chain crosses the membrane as a helical span at residues 38–58 (LFFFLCLNLSFAFVELLYGVW). The Lumenal portion of the chain corresponds to 59 to 67 (SNSLGLISD). The helical transmembrane segment at 68 to 88 (SFHMFFDCTALLAGLAASVIS) threads the bilayer. Over 89–102 (KWRSNDAFSYGYVR) the chain is Cytoplasmic. Residues 103-123 (AEVLAGFVNGLFLIFTAFFIF) traverse the membrane as a helical segment. The Lumenal segment spans residues 124 to 140 (SEGVERALEPPDVHHER). A helical transmembrane segment spans residues 141–161 (LLPVSILGFIVNLIGIFVFQH). The interval 161–223 (HGGHGHSHGS…HGQDYCHDDH (63 aa)) is his-rich loop. Residues 162–238 (GGHGHSHGSG…TGSSKQILQG (77 aa)) are Cytoplasmic-facing. The segment at 185–214 (HGHSHRGHGHSHEHKHGHTHDHGHSHGLSH) is disordered. Residues 186 to 211 (GHSHRGHGHSHEHKHGHTHDHGHSHG) show a composition bias toward basic residues. A helical transmembrane segment spans residues 239-259 (VFLHIVADTLGSIGVIISAIL). The Lumenal portion of the chain corresponds to 260 to 264 (MQNYG). The helical transmembrane segment at 265-285 (LMIADPICSMLIALLIGVSIV) threads the bilayer. The Cytoplasmic portion of the chain corresponds to 286–378 (PLLKESIGIL…LYIQIDVAAM (93 aa)).

It belongs to the cation diffusion facilitator (CDF) transporter (TC 2.A.4) family. SLC30A subfamily. As to quaternary structure, homooligomer.

The protein resides in the golgi apparatus membrane. It is found in the cytoplasmic vesicle. Its subcellular location is the golgi apparatus. It localises to the trans-Golgi network. The protein localises to the sarcoplasmic reticulum. The protein resides in the mitochondrion. The enzyme catalyses Zn(2+)(in) = Zn(2+)(out). Functionally, zinc ion transporter mediating zinc entry from the cytosol into the lumen of organelles along the secretory pathway. By contributing to zinc ion homeostasis within the early secretory pathway, regulates the activation and folding of enzymes like alkaline phosphatases. The protein is Zinc transporter 7 (SLC30A7) of Gallus gallus (Chicken).